Reading from the N-terminus, the 544-residue chain is uncharacterized protein (544 aa).

Helical transmembrane passes span 31–51 (ILVF…AALA), 52–72 (GSVL…IGLL), 84–104 (LPWM…QWLI), 116–136 (WGLF…YTTV), 162–182 (FAFS…IAAG), 191–211 (FGEL…WSAL), 230–250 (LAPL…AKSF), 257–277 (GFDY…GFGF), 318–338 (FLFV…TASI), 356–376 (TIAL…QALA), 383–403 (VIYF…WLVQ), 407–427 (VALL…AYLI), 450–470 (FFYA…LFLV), and 501–521 (FAVA…AIFY).

Belongs to the sodium:galactoside symporter (TC 2.A.2) family.

Its subcellular location is the cell membrane. This is an uncharacterized protein from Synechocystis sp. (strain ATCC 27184 / PCC 6803 / Kazusa).